Reading from the N-terminus, the 430-residue chain is Adenylosuccinate synthetase (430 aa).

GTP contacts are provided by residues 12 to 18 and 40 to 42; these read GDEGKGK and GHT. The active-site Proton acceptor is D13. The Mg(2+) site is built by D13 and G40. Residues 13 to 16, 38 to 41, T128, R142, Q223, T238, and R302 each bind IMP; these read DEGK and NAGH. The Proton donor role is filled by H41. 298–304 contacts substrate; the sequence is TTTGRPR. GTP is bound by residues R304, 330–332, and 412–414; these read SID and SVG.

It belongs to the adenylosuccinate synthetase family. Homodimer. The cofactor is Mg(2+).

Its subcellular location is the cytoplasm. The enzyme catalyses IMP + L-aspartate + GTP = N(6)-(1,2-dicarboxyethyl)-AMP + GDP + phosphate + 2 H(+). It functions in the pathway purine metabolism; AMP biosynthesis via de novo pathway; AMP from IMP: step 1/2. Its function is as follows. Plays an important role in the de novo pathway of purine nucleotide biosynthesis. Catalyzes the first committed step in the biosynthesis of AMP from IMP. The chain is Adenylosuccinate synthetase from Streptococcus agalactiae serotype III (strain NEM316).